The primary structure comprises 109 residues: Ferredoxin CarAc (109 aa).

One can recognise a 2Fe-2S ferredoxin-type domain in the interval Ala3–Gln108. The [2Fe-2S] cluster site is built by Cys43, Cys49, Cys52, and Cys89.

The protein belongs to the adrenodoxin/putidaredoxin family. In terms of assembly, monomer. Carbazole 1,9a-dioxygenase complex consists of a terminal oxygenase component CarAa, a ferredoxin reductase component fdr and a ferredoxin component CarAc. It depends on [2Fe-2S] cluster as a cofactor.

Functionally, part of the multicomponent carbazole 1,9a-dioxygenase (CARDO), that converts carbazole (CAR) into 2-aminobiphenyl-2,3-diol. Acts as a mediator in the electron transfer from fdr to CarAa. This is Ferredoxin CarAc (carAc) from Sphingomonas sp.